Consider the following 277-residue polypeptide: Caspase-3 (277 aa).

An N-acetylmethionine modification is found at Met-1. 2 consecutive propeptides follow at residues 1–9 and 10–28; these read MENTENSVD and SKSI…KSVD. Lys-11 carries the N6-acetyllysine modification. Position 26 is a phosphoserine (Ser-26). Catalysis depends on residues His-121 and Cys-163. Cys-163 bears the S-nitrosocysteine; in inhibited form mark.

Belongs to the peptidase C14A family. Heterotetramer that consists of two anti-parallel arranged heterodimers, each one formed by a 17 kDa (p17) and a 12 kDa (p12) subunit. Interacts with BIRC6/bruce. In terms of processing, cleavage by granzyme B, caspase-6, caspase-8 and caspase-10 generates the two active subunits. Additional processing of the propeptides is likely due to the autocatalytic activity of the activated protease. Active heterodimers between the small subunit of caspase-7 protease and the large subunit of caspase-3 also occur and vice versa. S-nitrosylated on its catalytic site cysteine in unstimulated cell lines and denitrosylated upon activation of the Fas apoptotic pathway, associated with an increase in intracellular caspase activity. Fas therefore activates caspase-3 not only by inducing the cleavage of the caspase zymogen to its active subunits, but also by stimulating the denitrosylation of its active site thiol. Post-translationally, ubiquitinated by BIRC6; this activity is inhibited by DIABLO/SMAC.

It localises to the cytoplasm. It carries out the reaction Strict requirement for an Asp residue at positions P1 and P4. It has a preferred cleavage sequence of Asp-Xaa-Xaa-Asp-|- with a hydrophobic amino-acid residue at P2 and a hydrophilic amino-acid residue at P3, although Val or Ala are also accepted at this position.. Inhibited by BIRC6; following inhibition of BIRC6-caspase binding by DIABLO/SMAC, BIRC6 is subjected to caspase cleavage, leading to an increase in active caspases. In terms of biological role, involved in the activation cascade of caspases responsible for apoptosis execution. At the onset of apoptosis, it proteolytically cleaves poly(ADP-ribose) polymerase PARP1 at a '216-Asp-|-Gly-217' bond. Cleaves and activates sterol regulatory element binding proteins (SREBPs) between the basic helix-loop-helix leucine zipper domain and the membrane attachment domain. Cleaves and activates caspase-6, -7 and -9 (CASP6, CASP7 and CASP9, respectively). Cleaves and inactivates interleukin-18 (IL18). Triggers cell adhesion in sympathetic neurons through RET cleavage. Cleaves IL-1 beta between an Asp and an Ala, releasing the mature cytokine which is involved in a variety of inflammatory processes. Cleaves and inhibits serine/threonine-protein kinase AKT1 in response to oxidative stress. Acts as an inhibitor of type I interferon production during virus-induced apoptosis by mediating cleavage of antiviral proteins CGAS, IRF3 and MAVS, thereby preventing cytokine overproduction. Also involved in pyroptosis by mediating cleavage and activation of gasdermin-E (GSDME). Cleaves XRCC4 and phospholipid scramblase proteins XKR4, XKR8 and XKR9, leading to promote phosphatidylserine exposure on apoptotic cell surface. Cleaves BIRC6 following inhibition of BIRC6-caspase binding by DIABLO/SMAC. The polypeptide is Caspase-3 (CASP3) (Macaca fascicularis (Crab-eating macaque)).